The sequence spans 528 residues: Tyrosine-protein kinase transforming protein Yes (528 aa).

Residues 1-12 (DKGPAMKYRTDN) are compositionally biased toward basic and acidic residues. Residues 1–35 (DKGPAMKYRTDNTPEPISSHVSHYGSDSSQATQSP) are disordered. Residues 18-29 (SSHVSHYGSDSS) are compositionally biased toward low complexity. One can recognise an SH3 domain in the interval 81–142 (GGGTVFVALY…PSNYVAPADS (62 aa)). An SH2 domain is found at 148–245 (WYFGKMGRKD…GLCHKLTTVC (98 aa)). One can recognise a Protein kinase domain in the interval 267 to 520 (LRLEVKLGQG…YIQSFLEDYF (254 aa)). Residues 273–281 (LGQGCFGEV) and Lys-295 each bind ATP. Asp-386 (proton acceptor) is an active-site residue. Residue Tyr-416 is modified to Phosphotyrosine; by autocatalysis.

This sequence belongs to the protein kinase superfamily. Tyr protein kinase family. SRC subfamily.

The catalysed reaction is L-tyrosyl-[protein] + ATP = O-phospho-L-tyrosyl-[protein] + ADP + H(+). This chain is Tyrosine-protein kinase transforming protein Yes (V-YES), found in Galliformes (Y73SV).